We begin with the raw amino-acid sequence, 226 residues long: ATP synthase F(0) complex subunit a (226 aa).

6 helical membrane-spanning segments follow: residues 12 to 32 (PTMM…ILFP), 68 to 88 (WALM…LGLL), 97 to 117 (QLSM…ITGF), 138 to 158 (IPML…ALAV), 164 to 184 (ITAG…LMDI), and 189 to 209 (AFIT…VALI).

This sequence belongs to the ATPase A chain family. In terms of assembly, component of the ATP synthase complex composed at least of ATP5F1A/subunit alpha, ATP5F1B/subunit beta, ATP5MC1/subunit c (homooctomer), MT-ATP6/subunit a, MT-ATP8/subunit 8, ATP5ME/subunit e, ATP5MF/subunit f, ATP5MG/subunit g, ATP5MK/subunit k, ATP5MJ/subunit j, ATP5F1C/subunit gamma, ATP5F1D/subunit delta, ATP5F1E/subunit epsilon, ATP5PF/subunit F6, ATP5PB/subunit b, ATP5PD/subunit d, ATP5PO/subunit OSCP. ATP synthase complex consists of a soluble F(1) head domain (subunits alpha(3) and beta(3)) - the catalytic core - and a membrane F(0) domain - the membrane proton channel (subunits c, a, 8, e, f, g, k and j). These two domains are linked by a central stalk (subunits gamma, delta, and epsilon) rotating inside the F1 region and a stationary peripheral stalk (subunits F6, b, d, and OSCP). Interacts with DNAJC30; interaction is direct.

The protein resides in the mitochondrion inner membrane. The enzyme catalyses H(+)(in) = H(+)(out). Its function is as follows. Subunit a, of the mitochondrial membrane ATP synthase complex (F(1)F(0) ATP synthase or Complex V) that produces ATP from ADP in the presence of a proton gradient across the membrane which is generated by electron transport complexes of the respiratory chain. ATP synthase complex consist of a soluble F(1) head domain - the catalytic core - and a membrane F(1) domain - the membrane proton channel. These two domains are linked by a central stalk rotating inside the F(1) region and a stationary peripheral stalk. During catalysis, ATP synthesis in the catalytic domain of F(1) is coupled via a rotary mechanism of the central stalk subunits to proton translocation. With the subunit c (ATP5MC1), forms the proton-conducting channel in the F(0) domain, that contains two crucial half-channels (inlet and outlet) that facilitate proton movement from the mitochondrial intermembrane space (IMS) into the matrix. Protons are taken up via the inlet half-channel and released through the outlet half-channel, following a Grotthuss mechanism. The polypeptide is ATP synthase F(0) complex subunit a (Phoca vitulina (Harbor seal)).